Consider the following 396-residue polypeptide: Queuine tRNA-ribosyltransferase catalytic subunit 1 (396 aa).

The active-site Proton acceptor is the D99. Queuine-binding positions include 99–103, D153, Q196, and G223; that span reads DSGGF. The tract at residues 254–260 is RNA binding; that stretch reads GVGYATD. Residue D273 is the Nucleophile of the active site. An RNA binding; important for wobble base 34 recognition region spans residues 278–282; that stretch reads TRTAR. C311, C313, C316, and H341 together coordinate Zn(2+).

It belongs to the queuine tRNA-ribosyltransferase family. As to quaternary structure, heterodimer of a catalytic subunit qtrt1 and an accessory subunit qtrt2. Zn(2+) is required as a cofactor.

The protein resides in the cytoplasm. The protein localises to the mitochondrion outer membrane. The enzyme catalyses guanosine(34) in tRNA + queuine = queuosine(34) in tRNA + guanine. Its function is as follows. Catalytic subunit of the queuine tRNA-ribosyltransferase (TGT) that catalyzes the base-exchange of a guanine (G) residue with queuine (Q) at position 34 (anticodon wobble position) in tRNAs with GU(N) anticodons (tRNA-Asp, -Asn, -His and -Tyr), resulting in the hypermodified nucleoside queuosine (7-(((4,5-cis-dihydroxy-2-cyclopenten-1-yl)amino)methyl)-7-deazaguanosine). Catalysis occurs through a double-displacement mechanism. The nucleophile active site attacks the C1' of nucleotide 34 to detach the guanine base from the RNA, forming a covalent enzyme-RNA intermediate. The proton acceptor active site deprotonates the incoming queuine, allowing a nucleophilic attack on the C1' of the ribose to form the product. The polypeptide is Queuine tRNA-ribosyltransferase catalytic subunit 1 (Xenopus laevis (African clawed frog)).